The following is a 210-amino-acid chain: MSKKSRISITHLLNPIQEENLKEKLQEINNQLISLCSSLPKRQSLPGPSSDILRFLSRNNLDPQEIGLIKTTYRLSTLLSKLREHEIVFNVVTKDHLLKKGVPNHYAASYRGHRFTRENVQILETWYRNHIDNPYLDHNSQQYLAQKTNLSKIQIKNWVANRRRKQKSIYISLFDIHNIESGEYAYIEKVCYIIIIICHLFLVFSLSCLT.

Positions 108 to 170 (ASYRGHRFTR…NRRRKQKSIY (63 aa)) form a DNA-binding region, homeobox; TALE-type.

It belongs to the TALE/M-ATYP homeobox family.

Its subcellular location is the nucleus. Mating type proteins are sequence specific DNA-binding proteins that act as master switches in yeast differentiation by controlling gene expression in a cell type-specific fashion. This chain is Mating-type-like protein ALPHA2, silenced copy at MTL3 (MTL3alpha2), found in Candida glabrata (strain ATCC 2001 / BCRC 20586 / JCM 3761 / NBRC 0622 / NRRL Y-65 / CBS 138) (Yeast).